The following is a 141-amino-acid chain: Hemoglobin subunit alpha (141 aa).

The Globin domain maps to 1-141 (VLSSDDKCNV…VSSVLTSKYR (141 aa)). His-58 lines the O2 pocket. His-87 is a binding site for heme b.

This sequence belongs to the globin family. As to quaternary structure, heterotetramer of two alpha chains and two beta chains. In terms of tissue distribution, red blood cells.

Functionally, involved in oxygen transport from the lung to the various peripheral tissues. Has antimicrobial activity against B.subtilis ATCC 6633. Has antioxidant activity. This Crocodylus siamensis (Siamese crocodile) protein is Hemoglobin subunit alpha.